A 165-amino-acid chain; its full sequence is Deoxyuridine 5'-triphosphate nucleotidohydrolase (165 aa).

Substrate contacts are provided by residues 66–68 (RSG), Asn-79, 83–85 (TVD), and Lys-93. The tract at residues 134–165 (ETSRGAGGHGSSGGHASLTPGARSAARVAQEG) is disordered.

The protein belongs to the dUTPase family. Requires Mg(2+) as cofactor.

The catalysed reaction is dUTP + H2O = dUMP + diphosphate + H(+). It functions in the pathway pyrimidine metabolism; dUMP biosynthesis; dUMP from dCTP (dUTP route): step 2/2. Functionally, this enzyme is involved in nucleotide metabolism: it produces dUMP, the immediate precursor of thymidine nucleotides and it decreases the intracellular concentration of dUTP so that uracil cannot be incorporated into DNA. In Nocardia farcinica (strain IFM 10152), this protein is Deoxyuridine 5'-triphosphate nucleotidohydrolase.